The sequence spans 164 residues: Probable Brix domain-containing ribosomal biogenesis protein (164 aa).

Positions 1 to 164 (MIITTSRKPS…IKTVKILDIE (164 aa)) constitute a Brix domain.

Its function is as follows. Probably involved in the biogenesis of the ribosome. The protein is Probable Brix domain-containing ribosomal biogenesis protein of Methanococcus maripaludis (strain DSM 14266 / JCM 13030 / NBRC 101832 / S2 / LL).